The sequence spans 912 residues: E3 ubiquitin-protein ligase HACE1 (912 aa).

ANK repeat units follow at residues 23-55 (LPED…NSKF), 64-93 (VKRS…DPNY), 97-126 (SGCT…DVNI), 130-159 (EGLT…NVDV), 163-192 (MGQT…DINR), 196-226 (SGAT…YLPD), and 228-253 (NGVT…QHHP). An HECT domain is found at 577–912 (NCEKLKQGIA…HCGSYGYTMA (336 aa)). The active-site Glycyl thioester intermediate is cysteine 879.

It localises to the golgi apparatus. The protein localises to the golgi stack membrane. The protein resides in the cytoplasm. It is found in the endoplasmic reticulum. It catalyses the reaction S-ubiquitinyl-[E2 ubiquitin-conjugating enzyme]-L-cysteine + [acceptor protein]-L-lysine = [E2 ubiquitin-conjugating enzyme]-L-cysteine + N(6)-ubiquitinyl-[acceptor protein]-L-lysine.. It participates in protein modification; protein ubiquitination. In terms of biological role, E3 ubiquitin-protein ligase involved in Golgi membrane fusion and regulation of small GTPases. Acts as a regulator of Golgi membrane dynamics during the cell cycle: recruited to Golgi membrane by Rab proteins and regulates postmitotic Golgi membrane fusion. Acts by mediating ubiquitination during mitotic Golgi disassembly, ubiquitination serving as a signal for Golgi reassembly later, after cell division. The sequence is that of E3 ubiquitin-protein ligase HACE1 (hace1) from Xenopus tropicalis (Western clawed frog).